Here is a 95-residue protein sequence, read N- to C-terminus: UPF0298 protein LVIS_1401 (95 aa).

It belongs to the UPF0298 family.

Its subcellular location is the cytoplasm. This chain is UPF0298 protein LVIS_1401, found in Levilactobacillus brevis (strain ATCC 367 / BCRC 12310 / CIP 105137 / JCM 1170 / LMG 11437 / NCIMB 947 / NCTC 947) (Lactobacillus brevis).